We begin with the raw amino-acid sequence, 345 residues long: DNA-directed RNA polymerase subunit alpha (345 aa).

An alpha N-terminal domain (alpha-NTD) region spans residues 1-234 (MRKNEMSTSK…DLLTTFLYVR (234 aa)). The tract at residues 266 to 345 (LEERVLENRF…DKKIVLNRRK (80 aa)) is alpha C-terminal domain (alpha-CTD).

Belongs to the RNA polymerase alpha chain family. In plastids the minimal PEP RNA polymerase catalytic core is composed of four subunits: alpha, beta, beta', and beta''. When a (nuclear-encoded) sigma factor is associated with the core the holoenzyme is formed, which can initiate transcription.

Its subcellular location is the plastid. It localises to the chloroplast. It catalyses the reaction RNA(n) + a ribonucleoside 5'-triphosphate = RNA(n+1) + diphosphate. In terms of biological role, DNA-dependent RNA polymerase catalyzes the transcription of DNA into RNA using the four ribonucleoside triphosphates as substrates. The chain is DNA-directed RNA polymerase subunit alpha from Adiantum capillus-veneris (Maidenhair fern).